We begin with the raw amino-acid sequence, 133 residues long: Small ribosomal subunit protein uS11 (133 aa).

This sequence belongs to the universal ribosomal protein uS11 family. As to quaternary structure, part of the 30S ribosomal subunit. Interacts with proteins S7 and S18. Binds to IF-3.

Functionally, located on the platform of the 30S subunit, it bridges several disparate RNA helices of the 16S rRNA. Forms part of the Shine-Dalgarno cleft in the 70S ribosome. This Cupriavidus metallidurans (strain ATCC 43123 / DSM 2839 / NBRC 102507 / CH34) (Ralstonia metallidurans) protein is Small ribosomal subunit protein uS11.